The following is a 568-amino-acid chain: Sulfite reductase [NADPH] hemoprotein beta-component (568 aa).

Positions 426, 432, 471, and 475 each coordinate [4Fe-4S] cluster. C475 contributes to the siroheme binding site.

Belongs to the nitrite and sulfite reductase 4Fe-4S domain family. In terms of assembly, alpha(8)-beta(8). The alpha component is a flavoprotein, the beta component is a hemoprotein. Siroheme is required as a cofactor. [4Fe-4S] cluster serves as cofactor.

It catalyses the reaction hydrogen sulfide + 3 NADP(+) + 3 H2O = sulfite + 3 NADPH + 4 H(+). It functions in the pathway sulfur metabolism; hydrogen sulfide biosynthesis; hydrogen sulfide from sulfite (NADPH route): step 1/1. Component of the sulfite reductase complex that catalyzes the 6-electron reduction of sulfite to sulfide. This is one of several activities required for the biosynthesis of L-cysteine from sulfate. The chain is Sulfite reductase [NADPH] hemoprotein beta-component from Xylella fastidiosa (strain M12).